The primary structure comprises 283 residues: Pantothenate synthetase (283 aa).

26–33 is an ATP binding site; the sequence is MGNLHEGH. Residue His33 is the Proton donor of the active site. Gln57 provides a ligand contact to (R)-pantoate. Beta-alanine is bound at residue Gln57. ATP is bound at residue 148–151; sequence GKKD. Gln154 is a binding site for (R)-pantoate. Residue 185–188 participates in ATP binding; it reads LSSR.

This sequence belongs to the pantothenate synthetase family. In terms of assembly, homodimer.

The protein localises to the cytoplasm. The catalysed reaction is (R)-pantoate + beta-alanine + ATP = (R)-pantothenate + AMP + diphosphate + H(+). It functions in the pathway cofactor biosynthesis; (R)-pantothenate biosynthesis; (R)-pantothenate from (R)-pantoate and beta-alanine: step 1/1. Its function is as follows. Catalyzes the condensation of pantoate with beta-alanine in an ATP-dependent reaction via a pantoyl-adenylate intermediate. This Polaromonas naphthalenivorans (strain CJ2) protein is Pantothenate synthetase.